The primary structure comprises 361 residues: Homer protein homolog 3 (361 aa).

The tract at residues 1–80 (MSTAREQPIF…TKTSQKFGQW (80 aa)) is required for interaction with NFATC2. The WH1 domain maps to 1 to 113 (MSTAREQPIF…EKFQEVKEAA (113 aa)). Residues 114 to 169 (RLAREKSQDGGELTSPALGLASHQVPPSPLVSANGPGEEKLFRSQSADAPGPTERE) are disordered. A phosphoserine mark is found at Ser-120 and Ser-159. 2 coiled-coil regions span residues 191–243 (ALQD…SEVT) and 254–358 (GQSL…RLAE).

The protein belongs to the Homer family. In terms of assembly, tetramer. Isoform 1 and isoform 2 encode coiled-coil structures that mediate homo- and heteromultimerization. Interacts with NFATC2; interaction is calcium independent; interaction competes with PPP3CA for NFATC2 binding; interaction is reduced by AKT activation. Interacts with NFATC1 and NFATC4. Interacts with SHANK1; forms a high-order complex at least composed of SHANK1 and HOMER3; the complex formation is regulated by CAMK2A-mediated phosphorylation.

The protein resides in the cytoplasm. Its subcellular location is the postsynaptic density. It localises to the synapse. Functionally, postsynaptic density scaffolding protein. Binds and cross-links cytoplasmic regions of GRM1, GRM5, ITPR1, DNM3, RYR1, RYR2, SHANK1 and SHANK3. By physically linking GRM1 and GRM5 with ER-associated ITPR1 receptors, it aids the coupling of surface receptors to intracellular calcium release. Isoforms can be differently regulated and may play an important role in maintaining the plasticity at glutamatergic synapses. Negatively regulates T cell activation by inhibiting the calcineurin-NFAT pathway. Acts by competing with calcineurin/PPP3CA for NFAT protein binding, hence preventing NFAT activation by PPP3CA. This is Homer protein homolog 3 from Homo sapiens (Human).